Reading from the N-terminus, the 398-residue chain is ATP-dependent RNA helicase eIF4A (398 aa).

The Q motif motif lies at 25–53; it reads DSFDSMDLKPELLRGVYAYGFERPSAIQQ. A Helicase ATP-binding domain is found at 56-226; the sequence is IKPIIAGHDV…TKFMRDPIRI (171 aa). Residue 69–76 participates in ATP binding; the sequence is AQSGTGKT. The DEAD box motif lies at 174-177; sequence DEAD. The Helicase C-terminal domain maps to 237 to 398; the sequence is GIKQFYIAVE…EMPMNVADLI (162 aa).

Belongs to the DEAD box helicase family. eIF4A subfamily. In terms of assembly, component of the eIF4F complex, which composition varies with external and internal environmental conditions. It is composed of at least eIF4A, eIF4E and eIF4G.

Its subcellular location is the cytoplasm. The enzyme catalyses ATP + H2O = ADP + phosphate + H(+). ATP-dependent RNA helicase which is a subunit of the eIF4F complex involved in cap recognition and is required for mRNA binding to ribosome. In the current model of translation initiation, eIF4A unwinds RNA secondary structures in the 5'-UTR of mRNAs which is necessary to allow efficient binding of the small ribosomal subunit, and subsequent scanning for the initiator codon. This chain is ATP-dependent RNA helicase eIF4A (tif1), found in Aspergillus niger (strain ATCC MYA-4892 / CBS 513.88 / FGSC A1513).